The sequence spans 372 residues: Chaperone protein DnaJ (372 aa).

Residues 5–69 (DYYEVLGLTK…QKKARYDQFG (65 aa)) form the J domain. A CR-type zinc finger spans residues 129 to 211 (GKETEIEIPK…CRGEGKVQKR (83 aa)). Cys142, Cys145, Cys159, Cys162, Cys185, Cys188, Cys199, and Cys202 together coordinate Zn(2+). CXXCXGXG motif repeat units lie at residues 142–149 (CETCHGSG), 159–166 (CSTCNGAG), 185–192 (CTTCHGTG), and 199–206 (CSTCRGEG).

Belongs to the DnaJ family. Homodimer. It depends on Zn(2+) as a cofactor.

It localises to the cytoplasm. In terms of biological role, participates actively in the response to hyperosmotic and heat shock by preventing the aggregation of stress-denatured proteins and by disaggregating proteins, also in an autonomous, DnaK-independent fashion. Unfolded proteins bind initially to DnaJ; upon interaction with the DnaJ-bound protein, DnaK hydrolyzes its bound ATP, resulting in the formation of a stable complex. GrpE releases ADP from DnaK; ATP binding to DnaK triggers the release of the substrate protein, thus completing the reaction cycle. Several rounds of ATP-dependent interactions between DnaJ, DnaK and GrpE are required for fully efficient folding. Also involved, together with DnaK and GrpE, in the DNA replication of plasmids through activation of initiation proteins. The protein is Chaperone protein DnaJ of Lysinibacillus sphaericus (strain C3-41).